Here is a 107-residue protein sequence, read N- to C-terminus: Ornithine carbamoyltransferase, catabolic (107 aa).

Residues 57 to 61 (STRTR) and glutamine 84 each bind carbamoyl phosphate.

The protein belongs to the aspartate/ornithine carbamoyltransferase superfamily. OTCase family.

Its subcellular location is the cytoplasm. It catalyses the reaction carbamoyl phosphate + L-ornithine = L-citrulline + phosphate + H(+). The protein operates within amino-acid degradation; L-arginine degradation via ADI pathway; carbamoyl phosphate from L-arginine: step 2/2. The protein is Ornithine carbamoyltransferase, catabolic (arcB) of Streptococcus pyogenes.